Reading from the N-terminus, the 263-residue chain is UPF0246 protein Strop_2927 (263 aa).

Belongs to the UPF0246 family.

This Salinispora tropica (strain ATCC BAA-916 / DSM 44818 / JCM 13857 / NBRC 105044 / CNB-440) protein is UPF0246 protein Strop_2927.